We begin with the raw amino-acid sequence, 195 residues long: GTP-dependent dephospho-CoA kinase (195 aa).

Residues D49, V50, D68, E127, and D150 each coordinate GTP.

It belongs to the GTP-dependent DPCK family.

The catalysed reaction is 3'-dephospho-CoA + GTP = GDP + CoA + H(+). Its pathway is cofactor biosynthesis; coenzyme A biosynthesis. In terms of biological role, catalyzes the GTP-dependent phosphorylation of the 3'-hydroxyl group of dephosphocoenzyme A to form coenzyme A (CoA). In Methanosarcina mazei (strain ATCC BAA-159 / DSM 3647 / Goe1 / Go1 / JCM 11833 / OCM 88) (Methanosarcina frisia), this protein is GTP-dependent dephospho-CoA kinase.